We begin with the raw amino-acid sequence, 253 residues long: 2,3-bisphosphoglycerate-dependent phosphoglycerate mutase (253 aa).

Substrate contacts are provided by residues 12–19 (RHGESEWN), 25–26 (TG), Arg64, 91–94 (ERHY), Lys102, 118–119 (RR), and 187–188 (GN). Residue His13 is the Tele-phosphohistidine intermediate of the active site. Glu91 (proton donor/acceptor) is an active-site residue.

The protein belongs to the phosphoglycerate mutase family. BPG-dependent PGAM subfamily.

The catalysed reaction is (2R)-2-phosphoglycerate = (2R)-3-phosphoglycerate. Its pathway is carbohydrate degradation; glycolysis; pyruvate from D-glyceraldehyde 3-phosphate: step 3/5. Functionally, catalyzes the interconversion of 2-phosphoglycerate and 3-phosphoglycerate. The protein is 2,3-bisphosphoglycerate-dependent phosphoglycerate mutase of Streptomyces griseus subsp. griseus (strain JCM 4626 / CBS 651.72 / NBRC 13350 / KCC S-0626 / ISP 5235).